The sequence spans 169 residues: UPF0303 protein Oant_1766 (169 aa).

This sequence belongs to the UPF0303 family.

The polypeptide is UPF0303 protein Oant_1766 (Brucella anthropi (strain ATCC 49188 / DSM 6882 / CCUG 24695 / JCM 21032 / LMG 3331 / NBRC 15819 / NCTC 12168 / Alc 37) (Ochrobactrum anthropi)).